Consider the following 319-residue polypeptide: Acetyl-coenzyme A carboxylase carboxyl transferase subunit alpha (319 aa).

Positions 35–296 (NIDEEVHRLR…KAQLLADLAD (262 aa)) constitute a CoA carboxyltransferase C-terminal domain.

Belongs to the AccA family. Acetyl-CoA carboxylase is a heterohexamer composed of biotin carboxyl carrier protein (AccB), biotin carboxylase (AccC) and two subunits each of ACCase subunit alpha (AccA) and ACCase subunit beta (AccD).

The protein localises to the cytoplasm. The enzyme catalyses N(6)-carboxybiotinyl-L-lysyl-[protein] + acetyl-CoA = N(6)-biotinyl-L-lysyl-[protein] + malonyl-CoA. The protein operates within lipid metabolism; malonyl-CoA biosynthesis; malonyl-CoA from acetyl-CoA: step 1/1. Functionally, component of the acetyl coenzyme A carboxylase (ACC) complex. First, biotin carboxylase catalyzes the carboxylation of biotin on its carrier protein (BCCP) and then the CO(2) group is transferred by the carboxyltransferase to acetyl-CoA to form malonyl-CoA. In Escherichia coli O139:H28 (strain E24377A / ETEC), this protein is Acetyl-coenzyme A carboxylase carboxyl transferase subunit alpha.